The chain runs to 491 residues: UDP-N-acetylmuramate--L-alanine ligase (491 aa).

Residue 126-132 participates in ATP binding; the sequence is GTHGKTT.

The protein belongs to the MurCDEF family.

The protein resides in the cytoplasm. It carries out the reaction UDP-N-acetyl-alpha-D-muramate + L-alanine + ATP = UDP-N-acetyl-alpha-D-muramoyl-L-alanine + ADP + phosphate + H(+). The protein operates within cell wall biogenesis; peptidoglycan biosynthesis. In terms of biological role, cell wall formation. In Salmonella paratyphi A (strain ATCC 9150 / SARB42), this protein is UDP-N-acetylmuramate--L-alanine ligase.